Reading from the N-terminus, the 301-residue chain is Tyrosine recombinase XerC (301 aa).

The 89-residue stretch at Met1–Val89 folds into the Core-binding (CB) domain. Residues Arg110–Asp290 enclose the Tyr recombinase domain. Residues Arg151, Lys175, His242, Arg245, and His268 contribute to the active site. Tyr277 functions as the O-(3'-phospho-DNA)-tyrosine intermediate in the catalytic mechanism.

It belongs to the 'phage' integrase family. XerC subfamily. Forms a cyclic heterotetrameric complex composed of two molecules of XerC and two molecules of XerD.

It is found in the cytoplasm. Site-specific tyrosine recombinase, which acts by catalyzing the cutting and rejoining of the recombining DNA molecules. The XerC-XerD complex is essential to convert dimers of the bacterial chromosome into monomers to permit their segregation at cell division. It also contributes to the segregational stability of plasmids. The chain is Tyrosine recombinase XerC from Neisseria meningitidis serogroup B (strain ATCC BAA-335 / MC58).